Here is a 357-residue protein sequence, read N- to C-terminus: MAARLAWRRGPGAAGQRPWLLLAPLLLVPLLVRPAEALVEGLYCGTRDCYEVLGVSRSASKAEIARAYRQLARRYHPDRYRPEPGDGPGGAPPSAEAFLLVATAYETLKDEETRKDYDYMLDHPEEYYSHYYHYYSRRLAPKVDVRVVILVSVCAISVFQYFSWWNSYNKSISYLATVPKYRIQATEIAKEQGLLKKAKEKGKNKKSKEEIRDEEENIIKNIIKSKIDIKGGYQKPQVRDLLLFQVLLAPVHLCSYIAWYCRWVYNFNIKGKEYGEEERLYIIRKSMKMSQSQFDSLEDHQKEMFLKRELWIKENYEVYKQEQEEELKKKLANDPRWKRYRRWMKNEGPGRLTFVDD.

Residues 19 to 39 (WLLLAPLLLVPLLVRPAEALV) form a helical membrane-spanning segment. The J domain maps to 48-121 (DCYEVLGVSR…ETRKDYDYML (74 aa)). 2 helical membrane-spanning segments follow: residues 147–167 (VVIL…WWNS) and 241–261 (LLLF…AWYC).

The protein belongs to the DNAJC25 family.

The protein localises to the membrane. This chain is DnaJ homolog subfamily C member 25 (Dnajc25), found in Rattus norvegicus (Rat).